We begin with the raw amino-acid sequence, 195 residues long: FMN-dependent NADH:quinone oxidoreductase (195 aa).

Residues Ser-9, 15-17 (SVS), 85-88 (MYNF), and 129-132 (SRGG) each bind FMN.

Belongs to the azoreductase type 1 family. As to quaternary structure, homodimer. Requires FMN as cofactor.

The enzyme catalyses 2 a quinone + NADH + H(+) = 2 a 1,4-benzosemiquinone + NAD(+). It carries out the reaction N,N-dimethyl-1,4-phenylenediamine + anthranilate + 2 NAD(+) = 2-(4-dimethylaminophenyl)diazenylbenzoate + 2 NADH + 2 H(+). Its function is as follows. Quinone reductase that provides resistance to thiol-specific stress caused by electrophilic quinones. Also exhibits azoreductase activity. Catalyzes the reductive cleavage of the azo bond in aromatic azo compounds to the corresponding amines. The protein is FMN-dependent NADH:quinone oxidoreductase of Stenotrophomonas maltophilia (strain K279a).